The following is a 347-amino-acid chain: uncharacterized protein (347 aa).

Coiled-coil stretches lie at residues 148–201 (DQQS…EKDG) and 261–298 (LENL…DTFS). Residues 151–203 (SISNLRKEEKEKQKENENENENENENENENEKENQELDKKVNQTNDNEKDGDE) are disordered. A compositionally biased stretch (basic and acidic residues) spans 155–167 (LRKEEKEKQKENE). A compositionally biased stretch (acidic residues) spans 168–178 (NENENENENEN). Residues 179–191 (ENEKENQELDKKV) are compositionally biased toward basic and acidic residues.

This is an uncharacterized protein from Dictyostelium discoideum (Social amoeba).